The chain runs to 281 residues: Release factor glutamine methyltransferase (281 aa).

Positions 142 and 184 each coordinate S-adenosyl-L-methionine. Substrate is bound at residue 184–187; the sequence is NPPY. Positions 261–281 are disordered; the sequence is AADHPDLNNRPRFATARKALP.

This sequence belongs to the protein N5-glutamine methyltransferase family. PrmC subfamily.

The catalysed reaction is L-glutaminyl-[peptide chain release factor] + S-adenosyl-L-methionine = N(5)-methyl-L-glutaminyl-[peptide chain release factor] + S-adenosyl-L-homocysteine + H(+). In terms of biological role, methylates the class 1 translation termination release factors RF1/PrfA and RF2/PrfB on the glutamine residue of the universally conserved GGQ motif. The sequence is that of Release factor glutamine methyltransferase from Streptomyces coelicolor (strain ATCC BAA-471 / A3(2) / M145).